A 1012-amino-acid chain; its full sequence is Ubiquitin-activating enzyme E1 1 (1012 aa).

Arginine 22 contributes to the ATP binding site. At serine 264 the chain carries Phosphoserine. ATP-binding residues include alanine 437 and aspartate 463. Mg(2+) is bound by residues aspartate 465 and glutamate 468. ATP contacts are provided by asparagine 471, arginine 474, lysine 487, valine 513, aspartate 537, and asparagine 538. Aspartate 537 provides a ligand contact to Mg(2+). Residue lysine 588 forms a Glycyl lysine isopeptide (Lys-Gly) (interchain with G-Cter in ubiquitin) linkage. The active-site Glycyl thioester intermediate is cysteine 593. Phosphoserine is present on serine 903.

Belongs to the ubiquitin-activating E1 family. Monomer. Interacts with the E2 ubiquitin-conjugating enzyme ubc4.

It is found in the cytoplasm. The protein resides in the nucleus. The enzyme catalyses ATP + ubiquitin + [E1 ubiquitin-activating enzyme]-L-cysteine = AMP + diphosphate + S-ubiquitinyl-[E1 ubiquitin-activating enzyme]-L-cysteine.. The protein operates within protein modification; protein ubiquitination. Its activity is regulated as follows. Ubiquitin transfer between the E1 ubiquitin-activating enzyme ptr3 and E2 ubiquitin-conjugating enzyme ubc4 is enhanced by the presence of magnesium and ATP, or adenylated ubiquitin. Its function is as follows. E1 ubiquitin-activating enzyme that catalyzes the first step in ubiquitin conjugation to mark cellular proteins for degradation through the ubiquitin-proteasome system. Activates ubiquitin by first adenylating its C-terminal glycine residue with ATP, and thereafter linking this residue to the side chain of a cysteine residue in E1, yielding a ubiquitin-E1 thioester and free AMP. In Schizosaccharomyces pombe (strain 972 / ATCC 24843) (Fission yeast), this protein is Ubiquitin-activating enzyme E1 1 (ptr3).